The chain runs to 209 residues: Dual specificity phosphatase 29 (209 aa).

The 149-residue stretch at His45 to Leu193 folds into the Tyrosine-protein phosphatase domain. Asn137–Arg144 lines the substrate pocket. Residue Cys138 is the Phosphocysteine intermediate of the active site.

This sequence belongs to the protein-tyrosine phosphatase family. Non-receptor class dual specificity subfamily.

Its subcellular location is the cytoplasm. It is found in the nucleus. It carries out the reaction O-phospho-L-tyrosyl-[protein] + H2O = L-tyrosyl-[protein] + phosphate. The enzyme catalyses O-phospho-L-seryl-[protein] + H2O = L-seryl-[protein] + phosphate. It catalyses the reaction O-phospho-L-threonyl-[protein] + H2O = L-threonyl-[protein] + phosphate. Its function is as follows. Dual specificity phosphatase able to dephosphorylate phosphotyrosine, phosphoserine and phosphothreonine residues, with a preference for phosphotyrosine as a substrate. Dual specificity phosphatase able to dephosphorylate phosphotyrosine, phosphoserine and phosphothreonine residues within the same substrate, with a preference for phosphotyrosine as a substrate. Involved in the modulation of AMPK and MAPK1/2 signaling pathway. The protein is Dual specificity phosphatase 29 (dusp29) of Xenopus laevis (African clawed frog).